Reading from the N-terminus, the 140-residue chain is Putative pre-16S rRNA nuclease (140 aa).

This sequence belongs to the YqgF nuclease family.

The protein localises to the cytoplasm. In terms of biological role, could be a nuclease involved in processing of the 5'-end of pre-16S rRNA. The polypeptide is Putative pre-16S rRNA nuclease (Edwardsiella ictaluri (strain 93-146)).